A 514-amino-acid chain; its full sequence is Glucose-6-phosphate 1-dehydrogenase 2 (514 aa).

R69 and K176 together coordinate NADP(+). Substrate is bound by residues H206, K210, E244, and D263. H268 serves as the catalytic Proton acceptor. A substrate-binding site is contributed by K366.

Belongs to the glucose-6-phosphate dehydrogenase family.

The catalysed reaction is D-glucose 6-phosphate + NADP(+) = 6-phospho-D-glucono-1,5-lactone + NADPH + H(+). It participates in carbohydrate degradation; pentose phosphate pathway; D-ribulose 5-phosphate from D-glucose 6-phosphate (oxidative stage): step 1/3. Catalyzes the oxidation of glucose 6-phosphate to 6-phosphogluconolactone. The chain is Glucose-6-phosphate 1-dehydrogenase 2 from Mycobacterium bovis (strain ATCC BAA-935 / AF2122/97).